The sequence spans 323 residues: tRNA U34 carboxymethyltransferase (323 aa).

Residues Lys91, Trp105, Lys110, Gly130, 152 to 154 (DPT), 181 to 182 (IE), Met196, Tyr200, and Arg315 contribute to the carboxy-S-adenosyl-L-methionine site.

The protein belongs to the class I-like SAM-binding methyltransferase superfamily. CmoB family. As to quaternary structure, homotetramer.

The enzyme catalyses carboxy-S-adenosyl-L-methionine + 5-hydroxyuridine(34) in tRNA = 5-carboxymethoxyuridine(34) in tRNA + S-adenosyl-L-homocysteine + H(+). Catalyzes carboxymethyl transfer from carboxy-S-adenosyl-L-methionine (Cx-SAM) to 5-hydroxyuridine (ho5U) to form 5-carboxymethoxyuridine (cmo5U) at position 34 in tRNAs. This chain is tRNA U34 carboxymethyltransferase, found in Escherichia coli O7:K1 (strain IAI39 / ExPEC).